The sequence spans 187 residues: HTH-type transcriptional repressor Rv1474c (187 aa).

An HTH tetR-type domain is found at 10–70 (AARRRQILDG…ALAREDTERM (61 aa)). Residues 33-52 (TVRRLEQAIGMSRGAIFHHF) constitute a DNA-binding region (H-T-H motif).

In terms of assembly, homodimer.

Its activity is regulated as follows. Binding to DNA is abolished in the presence of high concentration of iron. Specifically binds to tetracycline, which leads to a conformational change in the structure of the protein and inhibits the DNA binding activity. Its function is as follows. Represses the expression of the aconitase gene acn and its own expression, in an iron-responsive manner. Binds to the inverted repeat element present in the upstream region of acn (Rv1475c)-Rv1474c operon. Preferentially binds to major groove of the DNA. The chain is HTH-type transcriptional repressor Rv1474c from Mycobacterium tuberculosis (strain ATCC 25618 / H37Rv).